Reading from the N-terminus, the 445-residue chain is Neuropeptide Y receptor type 5 (445 aa).

Residues 1-42 lie on the Extracellular side of the membrane; that stretch reads MEFKLEEHFNKTFVTENNTAAARNAAFPAWEDYRGSVDDLQY. Residues Asn10 and Asn17 are each glycosylated (N-linked (GlcNAc...) asparagine). A helical membrane pass occupies residues 43–63; that stretch reads FLIGLYTFVSLLGFMGNLLIL. The Cytoplasmic segment spans residues 64 to 77; the sequence is MAVMKKRNQKTTVN. A helical transmembrane segment spans residues 78–98; it reads FLIGNLAFSDILVVLFCSPFT. At 99 to 117 the chain is on the extracellular side; sequence LTSVLLDQWMFGKAMCHIM. An intrachain disulfide couples Cys114 to Cys198. A helical transmembrane segment spans residues 118–138; the sequence is PFLQCVSVLVSTLILISIAIV. The Cytoplasmic segment spans residues 139–156; sequence RYHMIKHPISNNLTANHG. Residues 157–177 traverse the membrane as a helical segment; sequence YFLIATVWTLGFAICSPLPVF. Topologically, residues 178–208 are extracellular; that stretch reads HSLVELKETFGSALLSSKYLCVESWPSDSYR. Residues 209–229 traverse the membrane as a helical segment; sequence IAFTISLLLVQYILPLVCLTV. At 230 to 368 the chain is on the cytoplasmic side; it reads SHTSVCRSIS…KKRSRSVFYR (139 aa). A helical transmembrane segment spans residues 369–389; the sequence is LTILILVFAVSWMPLHVFHVV. Over 390–406 the chain is Extracellular; it reads TDFNDNLISNRHFKLVY. Residues 407–427 traverse the membrane as a helical segment; that stretch reads CICHLLGMMSCCLNPILYGFL. Residues 428–445 lie on the Cytoplasmic side of the membrane; it reads NNGIKADLRALIHCLHMS. A lipid anchor (S-palmitoyl cysteine) is attached at Cys441.

Belongs to the G-protein coupled receptor 1 family. In terms of tissue distribution, brain; hypothalamus.

The protein localises to the cell membrane. Receptor for neuropeptide Y and peptide YY. The activity of this receptor is mediated by G proteins that inhibit adenylate cyclase activity. Seems to be associated with food intake. Could be involved in feeding disorders. This chain is Neuropeptide Y receptor type 5 (Npy5r), found in Rattus norvegicus (Rat).